The primary structure comprises 143 residues: Nucleoside diphosphate kinase (143 aa).

6 residues coordinate ATP: Lys-11, Phe-59, Arg-87, Thr-93, Arg-104, and Asn-114. His-117 serves as the catalytic Pros-phosphohistidine intermediate.

Belongs to the NDK family. Homotetramer. Requires Mg(2+) as cofactor.

Its subcellular location is the cytoplasm. The catalysed reaction is a 2'-deoxyribonucleoside 5'-diphosphate + ATP = a 2'-deoxyribonucleoside 5'-triphosphate + ADP. The enzyme catalyses a ribonucleoside 5'-diphosphate + ATP = a ribonucleoside 5'-triphosphate + ADP. In terms of biological role, major role in the synthesis of nucleoside triphosphates other than ATP. The ATP gamma phosphate is transferred to the NDP beta phosphate via a ping-pong mechanism, using a phosphorylated active-site intermediate. This Shewanella sediminis (strain HAW-EB3) protein is Nucleoside diphosphate kinase.